The following is a 541-amino-acid chain: Chloride channel CLIC-like protein 1 (541 aa).

The signal sequence occupies residues 1–18 (MLCSLLLCGCLLLITGYA). Residues 19 to 184 (HDDDWIDPTD…EDYFGVDPYN (166 aa)) lie on the Lumenal side of the membrane. The chain crosses the membrane as a helical span at residues 185-205 (VFMVLLCLLCIVALVATELWT). The Cytoplasmic portion of the chain corresponds to 206-217 (YVRWHTQLKRVC). The chain crosses the membrane as a helical span at residues 218-238 (IISFLVSLGWNWIYLYKVAFA). Residues 239–329 (QHQANVAKMA…GEFIKALMKE (91 aa)) lie on the Lumenal side of the membrane. A helical membrane pass occupies residues 330–350 (IPVLLQIPVLVILALAVLGFC). Over 351–541 (YGAGQSVPML…GTDPVSSPCG (191 aa)) the chain is Cytoplasmic. The interval 362–381 (HFRGPEREPPRALEPDDRRR) is disordered. A compositionally biased stretch (basic and acidic residues) spans 364-381 (RGPEREPPRALEPDDRRR). 2 positions are modified to phosphoserine: Ser-434 and Ser-438. Thr-482 carries the phosphothreonine modification. Ser-504 is subject to Phosphoserine. The segment covering 511–522 (QLKTDSECRPHS) has biased composition (basic and acidic residues). Residues 511–541 (QLKTDSECRPHSTEAAAAAARGTDPVSSPCG) are disordered.

This sequence belongs to the chloride channel MCLC family. Homomultimers. Interacts with mitochondrial protein PIGBOS1 (via C-terminus); the interaction occurs at the mitochondria-associated endoplasmic reticulum (ER) membrane, a zone of contact between the ER and mitochondrial membranes, but does not appear to play a role in ER-mitochondria tethering and is not affected by ER stress. Interacts with CALR. In terms of tissue distribution, expressed in testis (spermatocytes), liver and lung (at protein level). Expressed in spleen, liver, testis, kidney, heart, brain and lung.

The protein resides in the endoplasmic reticulum membrane. The enzyme catalyses chloride(in) = chloride(out). The catalysed reaction is bromide(in) = bromide(out). It catalyses the reaction nitrate(in) = nitrate(out). It carries out the reaction fluoride(in) = fluoride(out). Anion-selective channel with Ca(2+)-dependent and voltage-independent gating. Permeable to small monovalent anions with selectivity for bromide &gt; chloride &gt; nitrate &gt; fluoride. Operates in the endoplasmic reticulum (ER) membrane where it mediates chloride efflux to compensate for the loss of positive charges from the ER lumen upon Ca(2+) release. Contributes to the maintenance of ER Ca(2+) pools and activation of unfolded protein response to prevent accumulation of misfolded proteins in the ER lumen. Particularly involved in ER homeostasis mechanisms underlying motor neurons and retinal photoreceptors survival. This Rattus norvegicus (Rat) protein is Chloride channel CLIC-like protein 1.